A 619-amino-acid polypeptide reads, in one-letter code: Alpha-(1,6)-fucosyltransferase (619 aa).

At 1–17 (MLLVRQLFGASANSWAR) the chain is on the cytoplasmic side. A helical; Signal-anchor for type II membrane protein membrane pass occupies residues 18-38 (ALIIFVLAWIGLVYVFVVKLT). Over 39–619 (NTQGQQAAGE…TAKLPLYAGI (581 aa)) the chain is Lumenal. 3 disulfide bridges follow: Cys253/Cys315, Cys261/Cys279, and Cys267/Cys271. In terms of domain architecture, GT23 spans 255 to 539 (NARKLVCKLN…PDAAHRFKSL (285 aa)). An SH3-binding motif is present at residues 345–351 (PRPPYLP). The important for donor substrate binding stretch occupies residues 411–412 (RR). Cysteines 511 and 518 form a disulfide. The region spanning 548 to 609 (QNAHNRRVVI…PSFKVEEKVD (62 aa)) is the SH3 domain.

This sequence belongs to the glycosyltransferase 23 family. Mn(2+) is required as a cofactor. Mg(2+) serves as cofactor.

The protein resides in the golgi apparatus. The protein localises to the golgi stack membrane. It carries out the reaction N(4)-{beta-D-GlcNAc-(1-&gt;2)-alpha-D-Man-(1-&gt;3)-[beta-D-GlcNAc-(1-&gt;2)-alpha-D-Man-(1-&gt;6)]-beta-D-Man-(1-&gt;4)-beta-D-GlcNAc-(1-&gt;4)-beta-D-GlcNAc}-L-asparaginyl-[protein] + GDP-beta-L-fucose = an N(4)-{beta-D-GlcNAc-(1-&gt;2)-alpha-D-Man-(1-&gt;3)-[beta-D-GlcNAc-(1-&gt;2)-alpha-D-Man-(1-&gt;6)]-beta-D-Man-(1-&gt;4)-beta-D-GlcNAc-(1-&gt;4)-[alpha-L-Fuc-(1-&gt;6)]-beta-D-GlcNAc}-L-asparaginyl-[protein] + GDP + H(+). It participates in protein modification; protein glycosylation. Its function is as follows. Catalyzes the addition of fucose in alpha 1-6 linkage to the first GlcNAc residue, next to the peptide chains in N-glycans. The addition is prevented if the GlcNAc residue is already fucosylated. This Drosophila melanogaster (Fruit fly) protein is Alpha-(1,6)-fucosyltransferase (FucT6).